The sequence spans 473 residues: GTPase Der (473 aa).

EngA-type G domains lie at 3–167 and 203–378; these read FTVA…GKDR and LRVA…RVWN. GTP-binding positions include 9–16, 56–60, 119–122, 209–216, 256–260, and 321–324; these read GRPNVGKS, DTAGL, NKSE, GRPNAGKS, DTAGM, and NKWD. Positions 379–463 constitute a KH-like domain; sequence KRISTARLNR…PIRIHFRSPD (85 aa).

It belongs to the TRAFAC class TrmE-Era-EngA-EngB-Septin-like GTPase superfamily. EngA (Der) GTPase family. In terms of assembly, associates with the 50S ribosomal subunit.

Functionally, GTPase that plays an essential role in the late steps of ribosome biogenesis. This chain is GTPase Der, found in Rhizobium etli (strain ATCC 51251 / DSM 11541 / JCM 21823 / NBRC 15573 / CFN 42).